We begin with the raw amino-acid sequence, 164 residues long: Thiol peroxidase (164 aa).

The Thioredoxin domain maps to 17-162; that stretch reads IKVGDTFPDF…YDEVLQAAQA (146 aa). Residue C58 is the Cysteine sulfenic acid (-SOH) intermediate of the active site. C58 and C92 form a disulfide bridge.

Belongs to the peroxiredoxin family. Tpx subfamily. As to quaternary structure, homodimer.

The enzyme catalyses a hydroperoxide + [thioredoxin]-dithiol = an alcohol + [thioredoxin]-disulfide + H2O. Thiol-specific peroxidase that catalyzes the reduction of hydrogen peroxide and organic hydroperoxides to water and alcohols, respectively. Plays a role in cell protection against oxidative stress by detoxifying peroxides. The chain is Thiol peroxidase from Clostridium acetobutylicum (strain ATCC 824 / DSM 792 / JCM 1419 / IAM 19013 / LMG 5710 / NBRC 13948 / NRRL B-527 / VKM B-1787 / 2291 / W).